A 117-amino-acid polypeptide reads, in one-letter code: Large ribosomal subunit protein uL18 (117 aa).

Belongs to the universal ribosomal protein uL18 family. As to quaternary structure, part of the 50S ribosomal subunit; part of the 5S rRNA/L5/L18/L25 subcomplex. Contacts the 5S and 23S rRNAs.

This is one of the proteins that bind and probably mediate the attachment of the 5S RNA into the large ribosomal subunit, where it forms part of the central protuberance. In Vibrio atlanticus (strain LGP32) (Vibrio splendidus (strain Mel32)), this protein is Large ribosomal subunit protein uL18.